The sequence spans 434 residues: ATP-dependent protease ATPase subunit HslU (434 aa).

ATP is bound by residues valine 18, 60-65 (GVGKTE), aspartate 247, glutamate 312, and arginine 384.

This sequence belongs to the ClpX chaperone family. HslU subfamily. In terms of assembly, a double ring-shaped homohexamer of HslV is capped on each side by a ring-shaped HslU homohexamer. The assembly of the HslU/HslV complex is dependent on binding of ATP.

Its subcellular location is the cytoplasm. In terms of biological role, ATPase subunit of a proteasome-like degradation complex; this subunit has chaperone activity. The binding of ATP and its subsequent hydrolysis by HslU are essential for unfolding of protein substrates subsequently hydrolyzed by HslV. HslU recognizes the N-terminal part of its protein substrates and unfolds these before they are guided to HslV for hydrolysis. In Bradyrhizobium sp. (strain ORS 278), this protein is ATP-dependent protease ATPase subunit HslU.